We begin with the raw amino-acid sequence, 590 residues long: DNA mismatch repair protein MutL (590 aa).

The span at 335–351 shows a compositional bias: polar residues; the sequence is PLSSASPKLPESTTATA. The tract at residues 335–354 is disordered; sequence PLSSASPKLPESTTATAQPH.

This sequence belongs to the DNA mismatch repair MutL/HexB family.

This protein is involved in the repair of mismatches in DNA. It is required for dam-dependent methyl-directed DNA mismatch repair. May act as a 'molecular matchmaker', a protein that promotes the formation of a stable complex between two or more DNA-binding proteins in an ATP-dependent manner without itself being part of a final effector complex. The protein is DNA mismatch repair protein MutL of Dichelobacter nodosus (strain VCS1703A).